We begin with the raw amino-acid sequence, 244 residues long: tRNA (guanine-N(7)-)-methyltransferase (244 aa).

S-adenosyl-L-methionine-binding residues include Glu-75, Glu-100, Asp-127, and Asp-150. The active site involves Asp-150. Substrate contacts are provided by residues Lys-154, Asp-186, and 223 to 226; that span reads TRFE.

Belongs to the class I-like SAM-binding methyltransferase superfamily. TrmB family.

It carries out the reaction guanosine(46) in tRNA + S-adenosyl-L-methionine = N(7)-methylguanosine(46) in tRNA + S-adenosyl-L-homocysteine. The protein operates within tRNA modification; N(7)-methylguanine-tRNA biosynthesis. Functionally, catalyzes the formation of N(7)-methylguanine at position 46 (m7G46) in tRNA. The polypeptide is tRNA (guanine-N(7)-)-methyltransferase (Xylella fastidiosa (strain M12)).